Reading from the N-terminus, the 528-residue chain is Glucose-6-phosphate isomerase (528 aa).

The active-site Proton donor is the Glu322. Catalysis depends on residues His351 and Lys455.

It belongs to the GPI family.

It localises to the cytoplasm. It catalyses the reaction alpha-D-glucose 6-phosphate = beta-D-fructose 6-phosphate. It functions in the pathway carbohydrate biosynthesis; gluconeogenesis. The protein operates within carbohydrate degradation; glycolysis; D-glyceraldehyde 3-phosphate and glycerone phosphate from D-glucose: step 2/4. In terms of biological role, catalyzes the reversible isomerization of glucose-6-phosphate to fructose-6-phosphate. The protein is Glucose-6-phosphate isomerase of Trichormus variabilis (strain ATCC 29413 / PCC 7937) (Anabaena variabilis).